Reading from the N-terminus, the 756-residue chain is Catalase-peroxidase (756 aa).

The signal sequence occupies residues 1–26 (MKGKTVNKQTLAALVSALLVFNPAVA). The segment at residues 126-248 (WHSAGTYRTL…LGATHMGLIY (123 aa)) is a cross-link (tryptophyl-tyrosyl-methioninium (Trp-Tyr) (with M-274)). The active-site Proton acceptor is histidine 127. Positions 248-274 (YVNPEGPKGVPDPLGSAKNIRTAFSRM) form a cross-link, tryptophyl-tyrosyl-methioninium (Tyr-Met) (with W-126). Histidine 289 serves as a coordination point for heme b.

The protein belongs to the peroxidase family. Peroxidase/catalase subfamily. As to quaternary structure, homodimer or homotetramer. The cofactor is heme b. Formation of the three residue Trp-Tyr-Met cross-link is important for the catalase, but not the peroxidase activity of the enzyme.

It catalyses the reaction H2O2 + AH2 = A + 2 H2O. The catalysed reaction is 2 H2O2 = O2 + 2 H2O. Its function is as follows. Bifunctional enzyme with both catalase and broad-spectrum peroxidase activity. In Shewanella loihica (strain ATCC BAA-1088 / PV-4), this protein is Catalase-peroxidase.